The chain runs to 184 residues: 1,6-anhydro-N-acetylmuramyl-L-alanine amidase AmpD (184 aa).

In terms of domain architecture, N-acetylmuramoyl-L-alanine amidase spans 30–171 (QDISLLVIHY…ISPKRKIDPG (142 aa)). Residue His38 coordinates Zn(2+). Glu120 serves as the catalytic Proton acceptor. Zn(2+) is bound by residues His159 and Asp169.

Belongs to the N-acetylmuramoyl-L-alanine amidase 2 family. It depends on Zn(2+) as a cofactor.

It is found in the cytoplasm. The enzyme catalyses Hydrolyzes the link between N-acetylmuramoyl residues and L-amino acid residues in certain cell-wall glycopeptides.. Involved in cell wall peptidoglycan recycling. Specifically cleaves the amide bond between the lactyl group of N-acetylmuramic acid and the alpha-amino group of the L-alanine in degradation products containing an anhydro N-acetylmuramyl moiety. The sequence is that of 1,6-anhydro-N-acetylmuramyl-L-alanine amidase AmpD (ampD) from Haemophilus influenzae (strain ATCC 51907 / DSM 11121 / KW20 / Rd).